Reading from the N-terminus, the 150-residue chain is 3-hydroxyacyl-[acyl-carrier-protein] dehydratase FabZ (150 aa).

The active site involves histidine 54.

It belongs to the thioester dehydratase family. FabZ subfamily.

The protein localises to the cytoplasm. It carries out the reaction a (3R)-hydroxyacyl-[ACP] = a (2E)-enoyl-[ACP] + H2O. Functionally, involved in unsaturated fatty acids biosynthesis. Catalyzes the dehydration of short chain beta-hydroxyacyl-ACPs and long chain saturated and unsaturated beta-hydroxyacyl-ACPs. This chain is 3-hydroxyacyl-[acyl-carrier-protein] dehydratase FabZ, found in Vibrio parahaemolyticus serotype O3:K6 (strain RIMD 2210633).